The primary structure comprises 1397 residues: ABC transporter G family member 41 (1397 aa).

In terms of domain architecture, ABC transporter 1 spans 138–411 (SLSKFVCSKK…FEGCGFKCPE (274 aa)). An ATP-binding site is contributed by 171–178 (GPPGCGKT). An ABC transmembrane type-2 1 domain is found at 489–701 (EMLKACSRRE…AEIGLTANEF (213 aa)). The next 6 helical transmembrane spans lie at 507 to 527 (FIYL…MTVF), 549 to 570 (ALFR…RLGV), 594 to 614 (IPLS…VIGY), 625 to 645 (FIIL…IASI), 651 to 671 (ACSI…GFVI), and 735 to 755 (TAFG…TLAL). An ABC transporter 2 domain is found at 805-1050 (VTFQNVQYYI…VIKYFESIPG (246 aa)). 842-849 (GVSGAGKT) contacts ATP. Residues 1122–1336 (GQLKACLWKQ…VLEGLLSSQY (215 aa)) enclose the ABC transmembrane type-2 2 domain. 7 helical membrane passes run 1141–1161 (HNLT…LLFW), 1173–1193 (LFSI…NNCA), 1229–1249 (VPYS…MIGY), 1260–1280 (LYSI…MVAL), 1286–1306 (MALT…GFVM), 1314–1334 (WWIW…LLSS), and 1369–1389 (VVAF…AFFM).

This sequence belongs to the ABC transporter superfamily. ABCG family. PDR (TC 3.A.1.205) subfamily. Confined to roots.

Its subcellular location is the membrane. In terms of biological role, may be a general defense protein. The sequence is that of ABC transporter G family member 41 (ABCG41) from Arabidopsis thaliana (Mouse-ear cress).